The chain runs to 697 residues: Pentatricopeptide repeat-containing protein At2g13600 (697 aa).

16 PPR repeats span residues 18–53, 54–84, 85–115, 116–150, 151–185, 186–216, 217–251, 252–282, 288–322, 324–349, 350–384, 385–419, 426–456, 457–491, 492–527, and 528–558; these read DSSP…GFSN, EIFI…MPQR, NIYT…MPER, DQCT…GFVL, NEYS…PFLS, DVYI…MGDR, NVVS…RVEP, DEVT…VVKN, DIIL…NVIA, TSMI…MAER, NVVS…SVCP, THYS…GFKF, DIFV…MMER, DCVS…GEKP, DHIT…GVAP, and LRDH…MPMQ. The interval 563–638 is type E motif; the sequence is IWGSLLAACK…QPGCSWIKIQ (76 aa). Positions 639–669 are type E(+) motif; sequence GHDHVFMVKDKSHPRKKQIHSLLDILIAEMR.

It belongs to the PPR family. PCMP-E subfamily.

This Arabidopsis thaliana (Mouse-ear cress) protein is Pentatricopeptide repeat-containing protein At2g13600 (PCMP-E76).